A 983-amino-acid polypeptide reads, in one-letter code: Serine/threonine-protein kinase N2 (983 aa).

The region spanning 33–109 is the REM-1 1 domain; that stretch reads KLDFSDTMVQ…LQELNAHIVV (77 aa). N6-acetyllysine is present on Lys-77. The tract at residues 107–135 is disordered; the sequence is IVVSDPEDSTDCPRTPDTPNSDSRSSTSN. Ser-110 is modified (phosphoserine). 2 positions are modified to phosphothreonine: Thr-121 and Thr-124. The segment covering 121–135 has biased composition (low complexity); that stretch reads TPDTPNSDSRSSTSN. REM-1 domains are found at residues 121–203 and 204–284; these read TPDT…TNEL and AFDN…ELPR. Residues Ser-301, Ser-305, Ser-359, and Ser-361 each carry the phosphoserine modification. The segment at 351–382 is disordered; it reads TSVALPGWSPSDNRSSFMSRTSKSKSGSSRNL. Residues 352–472 form the C2 domain; it reads SVALPGWSPS…LYLEPQGTLF (121 aa). Over residues 364–380 the composition is skewed to low complexity; sequence RSSFMSRTSKSKSGSSR. The segment at 381–462 is necessary to rescue apical junction formation; it reads NLLKTDDLSN…FLDNQRHGMC (82 aa). Phosphoserine is present on residues Ser-534, Ser-582, Ser-619, and Ser-630. The interval 553 to 588 is disordered; sequence LAPPASDSTVTKLDFDLEPEPPPAPPRASSLGETDE. A Protein kinase domain is found at 656 to 915; sequence FRCCAVLGRG…AEDVKKHPFF (260 aa). Residues 662 to 670 and Lys-685 each bind ATP; that span reads LGRGHFGKV. The active-site Proton acceptor is the Asp-781. Thr-815 carries the post-translational modification Phosphothreonine; by PDPK1. A necessary for the catalytic activity region spans residues 916–976; it reads RLTDWSALMD…EEEQEMFHDF (61 aa). An AGC-kinase C-terminal domain is found at 916 to 983; sequence RLTDWSALMD…HDFDYVADWC (68 aa). Ser-951 carries the phosphoserine modification. Thr-957 carries the post-translational modification Phosphothreonine. The tract at residues 977–983 is negatively regulates the responsiveness of the catalytic activity by cardiolipin and is required for optimal activation by the GTP-bound RhoA; it reads DYVADWC.

This sequence belongs to the protein kinase superfamily. AGC Ser/Thr protein kinase family. PKC subfamily. As to quaternary structure, interacts (via the REM repeats) with RHOA (GTP-bound form preferentially) and interacts (via the REM repeats) with RAC1 (GTP-bound form preferentially); the interactions induce its autophosphorylation. Interacts with NCK1 (via SH3 domains). Interacts with RHOC. Interacts with NCK1 and NCK2. Interacts with CD44. Interacts (via C-terminal kinase domain) with PDPK1; the interaction stimulates PDPK1 kinase activity. Interacts with MAP3K2; the interaction activates PRK2 kinase activity in a MAP3K2-independent kinase activity. Interacts (via C-terminal domain) with AKT1; the interaction occurs with the C-terminal cleavage product of PRK2 in apoptotic cells. Interacts (via C-terminus) with PTPN13 (via PDZ 3 domain). Interacts with CDK10. In terms of processing, phosphorylated during mitosis. Autophosphorylated. Phosphorylated. Phosphorylated by CDK10. Activated by limited proteolysis with trypsin. Proteolytically cleaved by caspase-3 during the induction of apoptotic cell death. Ubiquitous. Highly expressed in liver and lung Expressed in astrocytes (at protein level). Ubiquitous.

It localises to the cytoplasm. The protein resides in the nucleus. The protein localises to the membrane. It is found in the cell projection. Its subcellular location is the lamellipodium. It localises to the cytoskeleton. The protein resides in the cleavage furrow. The protein localises to the midbody. It is found in the cell junction. The enzyme catalyses L-seryl-[protein] + ATP = O-phospho-L-seryl-[protein] + ADP + H(+). It catalyses the reaction L-threonyl-[protein] + ATP = O-phospho-L-threonyl-[protein] + ADP + H(+). With respect to regulation, kinase activity is activated upon binding to GTP-bound Rho1/Rac1 GTPases. Activated by caspase-3 (CASP3) cleavage during apoptosis. Activated by lipids, particularly cardiolipin and to a lesser extent by other acidic phospholipids and unsaturated fatty acids. Two specific sites, Thr-815 (activation loop of the kinase domain) and Thr-957 (turn motif), need to be phosphorylated for its full activation. Functionally, PKC-related serine/threonine-protein kinase and Rho/Rac effector protein that participates in specific signal transduction responses in the cell. Plays a role in the regulation of cell cycle progression, actin cytoskeleton assembly, cell migration, cell adhesion, tumor cell invasion and transcription activation signaling processes. Phosphorylates CTTN in hyaluronan-induced astrocytes and hence decreases CTTN ability to associate with filamentous actin. Phosphorylates HDAC5, therefore lead to impair HDAC5 import. Direct RhoA target required for the regulation of the maturation of primordial junctions into apical junction formation in bronchial epithelial cells. Required for G2/M phases of the cell cycle progression and abscission during cytokinesis in a ECT2-dependent manner. Stimulates FYN kinase activity that is required for establishment of skin cell-cell adhesion during keratinocytes differentiation. Regulates epithelial bladder cells speed and direction of movement during cell migration and tumor cell invasion. Inhibits Akt pro-survival-induced kinase activity. Mediates Rho protein-induced transcriptional activation via the c-fos serum response factor (SRF). Involved in the negative regulation of ciliogenesis. The sequence is that of Serine/threonine-protein kinase N2 (Pkn2) from Mus musculus (Mouse).